The chain runs to 392 residues: Nuclear speckle splicing regulatory protein 1 homolog (392 aa).

3 disordered regions span residues 1-73 (MASK…IFDY), 113-169 (RQLE…AFND), and 187-357 (LLND…ARLD). Composition is skewed to basic and acidic residues over residues 54–65 (KAAEREHQKAEA), 113–132 (RQLEQFSREERQQLREREKE), 149–160 (KQQEEVKKHREQ), 205–238 (QKNVRKREDSDEEIDPKPEKSDKKPAEKLKKSIY), and 313–357 (KSIE…ARLD). Positions 76–132 (NYDEIQAIKNEKKEEARKADKNRESKYAENIIKAHARRQLEQFSREERQQLREREKE) form a coiled coil.

This sequence belongs to the NSRP1 family. As to expression, expressed in the intestine, nervous system and head neurons in both larvae and adults. Expressed in the distal tip cell.

It is found in the cytoplasm. It localises to the nucleus. Functionally, required for the cessation of distal tip cell migration at the end of larval morphogenesis. This Caenorhabditis elegans protein is Nuclear speckle splicing regulatory protein 1 homolog (ccdc-55).